Reading from the N-terminus, the 290-residue chain is MLKTVHQKAGRHTRPVRAWLKLLWQRIDEDNMTTLAGNLAYVSLLSLVPLIAVVFALFAAFPMFSDVSIQLRHFIFANFMPATGDVIQRYIEQFVANSNKMTAVGACGLIVTALLLMYAIDSALNTIWRSKRTRPKVYSFAVYWMILTLGPLLAGVSLAISSYLLSLRWASDLNTVIDNVLHILPLLLSWISFWLLYSIVPTTRVPNRDALVGAFVAALLFEAGKKGFALYITMFPSYQLIYGVLAVIPILFVWVYWTWCIVLLGAEITVTLGEYRKLKQAAEQEEADQP.

At 1-43 the chain is on the cytoplasmic side; sequence MLKTVHQKAGRHTRPVRAWLKLLWQRIDEDNMTTLAGNLAYVS. Residues 44 to 64 form a helical membrane-spanning segment; it reads LLSLVPLIAVVFALFAAFPMF. Topologically, residues 65-103 are periplasmic; sequence SDVSIQLRHFIFANFMPATGDVIQRYIEQFVANSNKMTA. The chain crosses the membrane as a helical span at residues 104 to 124; it reads VGACGLIVTALLLMYAIDSAL. The Cytoplasmic portion of the chain corresponds to 125–139; sequence NTIWRSKRTRPKVYS. The chain crosses the membrane as a helical span at residues 140-160; the sequence is FAVYWMILTLGPLLAGVSLAI. Residues 161–179 are Periplasmic-facing; it reads SSYLLSLRWASDLNTVIDN. Residues 180–200 traverse the membrane as a helical segment; sequence VLHILPLLLSWISFWLLYSIV. Over 201-209 the chain is Cytoplasmic; it reads PTTRVPNRD. A helical transmembrane segment spans residues 210–230; the sequence is ALVGAFVAALLFEAGKKGFAL. At 231-243 the chain is on the periplasmic side; the sequence is YITMFPSYQLIYG. A helical membrane pass occupies residues 244–264; it reads VLAVIPILFVWVYWTWCIVLL. The Cytoplasmic portion of the chain corresponds to 265–290; the sequence is GAEITVTLGEYRKLKQAAEQEEADQP.

It belongs to the UPF0761 family.

It is found in the cell inner membrane. The sequence is that of UPF0761 membrane protein YihY from Salmonella typhimurium (strain LT2 / SGSC1412 / ATCC 700720).